A 309-amino-acid chain; its full sequence is tRNA dimethylallyltransferase (309 aa).

Residue 11-18 (GPTASGKS) coordinates ATP. 13–18 (TASGKS) provides a ligand contact to substrate. Interaction with substrate tRNA regions lie at residues 36–39 (DSMQ) and 160–164 (QRLLR).

The protein belongs to the IPP transferase family. In terms of assembly, monomer. Mg(2+) serves as cofactor.

It catalyses the reaction adenosine(37) in tRNA + dimethylallyl diphosphate = N(6)-dimethylallyladenosine(37) in tRNA + diphosphate. Its function is as follows. Catalyzes the transfer of a dimethylallyl group onto the adenine at position 37 in tRNAs that read codons beginning with uridine, leading to the formation of N6-(dimethylallyl)adenosine (i(6)A). The protein is tRNA dimethylallyltransferase of Caulobacter sp. (strain K31).